A 259-amino-acid chain; its full sequence is Leucine-rich repeat-containing protein 61 (259 aa).

LRR repeat units follow at residues 54–75 (NLEWLDLSGNALTHLGPLASLR), 76–97 (QLAVLNVSNNRLTGLEPLAACE), and 98–119 (NLQSLNAAGNLLTTPGQLQCLA). The region spanning 138–178 (NPLCANASYWAVVRELLPGLKVIDGERVSGRGSELYQLCRD) is the LRRCT domain.

The protein is Leucine-rich repeat-containing protein 61 (Lrrc61) of Mus musculus (Mouse).